The primary structure comprises 165 residues: uncharacterized protein (165 aa).

Helical transmembrane passes span 7 to 27 (LWLALVLLILSIPAVSAQITV) and 141 to 161 (KGTPGFEAFVAVAVIGSIALL).

The protein localises to the cell membrane. This is an uncharacterized protein from Archaeoglobus fulgidus (strain ATCC 49558 / DSM 4304 / JCM 9628 / NBRC 100126 / VC-16).